A 468-amino-acid chain; its full sequence is H(+)/Cl(-) exchange transporter ClcA (468 aa).

The Cytoplasmic portion of the chain corresponds to 1–30; it reads MSTRETFKISLLAKMPKDVINQFLSKDKTP. Residues 31–67 form a helical membrane-spanning segment; it reads FSVLFLSLLVGILAGLVGTYFEQAVHLVSETRTDWLK. Residues 68–74 lie on the Periplasmic side of the membrane; it reads SEIGSFL. The helical transmembrane segment at 75–98 threads the bilayer; that stretch reads PLWLAAFLISAFLAFIGYFLVHRF. The short motif at 104–108 is the Selectivity filter part_1 element; the sequence is GSGIP. S105 contributes to the chloride binding site. The helical intramembrane region spans 107–114; the sequence is IPEIEGAM. Topologically, residues 115–121 are cytoplasmic; that stretch reads DGMRPVR. 2 consecutive transmembrane segments (helical) span residues 122–139 and 146–164; these read WWRV…ALGS and EGPT…SDIF. The short motif at 144 to 148 is the Selectivity filter part_2 element; the sequence is GREGP. The Cytoplasmic portion of the chain corresponds to 165–174; sequence RVKNEDTRHS. 2 consecutive intramembrane regions (helical) follow at residues 175-187 and 191-199; these read LLAA…LAAA and PLAGIMFVI. Residues 200–212 are Cytoplasmic-facing; sequence EEMRPQFRYTLIS. A helical transmembrane segment spans residues 213 to 230; that stretch reads VRAVIISAVAANIVFRVI. Residues 231-250 lie on the Periplasmic side of the membrane; sequence NGQDAVITMPQYDAPELSTL. The helical transmembrane segment at 251–279 threads the bilayer; sequence GLFLLLGALFGVFGVLFNYLITLAQDLFV. The Cytoplasmic portion of the chain corresponds to 280-285; the sequence is KFHRND. Residues 286 to 307 traverse the membrane as a helical segment; sequence RKRYLLTGSMIGGCFGLLLLYV. Over 308-327 the chain is Periplasmic; that stretch reads PELTGGGISLIPTITNGGYG. Helical transmembrane passes span 328 to 347 and 353 to 374; these read AGIL…LCFG and GIFA…LIAK. Residues 353 to 357 carry the Selectivity filter part_3 motif; that stretch reads GIFAP. 2 residues coordinate chloride: I354 and F355. Residues 375–384 are Periplasmic-facing; it reads VWFPELNIEP. The helical intramembrane region spans 385 to 399; the sequence is GMFAIAGMGALFAAT. An intramembrane region (note=Loop between two helices) is located at residues 400–402; it reads VRA. An intramembrane region (helical) is located at residues 403 to 414; that stretch reads PITGILLVIEMT. The segment at residues 415–419 is an intramembrane region (note=Loop between two helices); it reads NNYHL. Residues 420 to 436 traverse the membrane as a helical segment; the sequence is ILPLIITSLGAVIFAQL. Residues 437 to 468 lie on the Cytoplasmic side of the membrane; it reads LGGQPIYSQLLHRTLKNQKLQQQDLPPQSPNS. Y443 contributes to the chloride binding site.

It belongs to the chloride channel (TC 2.A.49) family. ClcA subfamily. In terms of assembly, homodimer.

The protein resides in the cell inner membrane. It catalyses the reaction 2 chloride(in) + H(+)(out) = 2 chloride(out) + H(+)(in). In terms of biological role, proton-coupled chloride transporter. Functions as antiport system and exchanges two chloride ions for 1 proton. Probably acts as an electrical shunt for an outwardly-directed proton pump that is linked to amino acid decarboxylation, as part of the extreme acid resistance (XAR) response. This is H(+)/Cl(-) exchange transporter ClcA from Vibrio cholerae serotype O1 (strain ATCC 39541 / Classical Ogawa 395 / O395).